Reading from the N-terminus, the 279-residue chain is Large ribosomal subunit protein uL2 (279 aa).

Disordered stretches follow at residues 1–43 (MGIK…TAGR) and 207–279 (KAGR…PGKH). Residues 8–22 (PTTNGRRNMTASDFS) show a composition bias toward polar residues. A compositionally biased stretch (basic and acidic residues) spans 23-33 (EITKTKPEKSL). Residues 34–43 (LDSQSHTAGR) show a composition bias toward polar residues. Composition is skewed to basic residues over residues 209–219 (GRTRWQGKRPT) and 254–279 (TLGK…PGKH).

Belongs to the universal ribosomal protein uL2 family. In terms of assembly, part of the 50S ribosomal subunit. Forms a bridge to the 30S subunit in the 70S ribosome.

In terms of biological role, one of the primary rRNA binding proteins. Required for association of the 30S and 50S subunits to form the 70S ribosome, for tRNA binding and peptide bond formation. It has been suggested to have peptidyltransferase activity; this is somewhat controversial. Makes several contacts with the 16S rRNA in the 70S ribosome. This Lactiplantibacillus plantarum (strain ATCC BAA-793 / NCIMB 8826 / WCFS1) (Lactobacillus plantarum) protein is Large ribosomal subunit protein uL2.